The chain runs to 266 residues: ATP synthase subunit a (266 aa).

Helical transmembrane passes span isoleucine 28 to methionine 48, leucine 90 to phenylalanine 110, valine 125 to threonine 145, histidine 158 to leucine 178, leucine 187 to asparagine 207, alanine 216 to isoleucine 236, and leucine 239 to leucine 259.

Belongs to the ATPase A chain family. As to quaternary structure, F-type ATPases have 2 components, CF(1) - the catalytic core - and CF(0) - the membrane proton channel. CF(1) has five subunits: alpha(3), beta(3), gamma(1), delta(1), epsilon(1). CF(0) has three main subunits: a(1), b(2) and c(9-12). The alpha and beta chains form an alternating ring which encloses part of the gamma chain. CF(1) is attached to CF(0) by a central stalk formed by the gamma and epsilon chains, while a peripheral stalk is formed by the delta and b chains.

It is found in the cell inner membrane. Key component of the proton channel; it plays a direct role in the translocation of protons across the membrane. This is ATP synthase subunit a from Zymomonas mobilis subsp. mobilis (strain ATCC 31821 / ZM4 / CP4).